Here is a 129-residue protein sequence, read N- to C-terminus: Small ribosomal subunit protein uS11 (129 aa).

It belongs to the universal ribosomal protein uS11 family. Part of the 30S ribosomal subunit. Interacts with proteins S7 and S18. Binds to IF-3.

Its function is as follows. Located on the platform of the 30S subunit, it bridges several disparate RNA helices of the 16S rRNA. Forms part of the Shine-Dalgarno cleft in the 70S ribosome. This Geobacillus sp. (strain WCH70) protein is Small ribosomal subunit protein uS11.